Here is a 531-residue protein sequence, read N- to C-terminus: Efflux pump terG (531 aa).

Polar residues predominate over residues 1-11 (MSSSTLEGQET). Positions 1-27 (MSSSTLEGQETASHHSKNSPSRHGDDG) are disordered. Helical transmembrane passes span 86–106 (GKLS…ILIG), 117–137 (AIFV…GVSV), 145–165 (ILAR…ALAI), 179–199 (FAWF…FGPL), 207–227 (WIYW…IVAI), 249–269 (IDLL…FAWN), 280–300 (YVYV…YVEL), 319–339 (FVFG…FYVI), 351–371 (IQMA…ALIV), 380–400 (ASSI…LMAL), 402–422 (PVHS…TFAM), 447–467 (SVIM…AGTI), and 488–508 (TLWF…IFLL).

This sequence belongs to the major facilitator superfamily.

It localises to the cell membrane. In terms of biological role, efflux pump that might be required for efficient secretion of terrein or other secondary metabolies produced by the terrein genne cluster. In Aspergillus terreus (strain NIH 2624 / FGSC A1156), this protein is Efflux pump terG.